The following is a 224-amino-acid chain: Small ribosomal subunit protein eS1 (224 aa).

The protein belongs to the eukaryotic ribosomal protein eS1 family.

The polypeptide is Small ribosomal subunit protein eS1 (Methanococcus maripaludis (strain C7 / ATCC BAA-1331)).